A 322-amino-acid chain; its full sequence is uncharacterized protein (322 aa).

2 disordered regions span residues 1–51 (MARS…GAWA) and 107–130 (QERQ…DRPD). The segment covering 119 to 130 (LHLEPGNEDRPD) has biased composition (basic and acidic residues).

In terms of tissue distribution, expressed in skin and fetal lung.

This is an uncharacterized protein from Homo sapiens (Human).